Consider the following 554-residue polypeptide: (+)-delta-cadinene synthase isozyme XC1 (554 aa).

Over residues 1 to 16 (MASQVSQMPSSSPLSS) the composition is skewed to low complexity. Positions 1 to 23 (MASQVSQMPSSSPLSSNKDEMRP) are disordered. Positions 307, 311, 451, and 455 each coordinate Mg(2+). A DDXXD motif motif is present at residues 307-311 (DDTYD).

This sequence belongs to the terpene synthase family. The cofactor is Mg(2+).

It catalyses the reaction (2E,6E)-farnesyl diphosphate = (1S,8aR)-delta-cadinene + diphosphate. It functions in the pathway secondary metabolite biosynthesis; terpenoid biosynthesis. In terms of biological role, responsible for the cyclization of trans,trans-farnesyl diphosphate (FPP) to (+)-delta cadinene. This is (+)-delta-cadinene synthase isozyme XC1 from Gossypium arboreum (Tree cotton).